The chain runs to 302 residues: Small ribosomal subunit biogenesis GTPase RsgA (302 aa).

The CP-type G domain maps to 69-229 (KNLLIRPKVA…VGDTPGFSKV (161 aa)). GTP is bound by residues 118 to 121 (NKID) and 172 to 180 (GPSGVGKSS). 4 residues coordinate Zn(2+): C252, C257, H259, and C265.

The protein belongs to the TRAFAC class YlqF/YawG GTPase family. RsgA subfamily. As to quaternary structure, monomer. Associates with 30S ribosomal subunit, binds 16S rRNA. Zn(2+) serves as cofactor.

The protein localises to the cytoplasm. Its function is as follows. One of several proteins that assist in the late maturation steps of the functional core of the 30S ribosomal subunit. Helps release RbfA from mature subunits. May play a role in the assembly of ribosomal proteins into the subunit. Circularly permuted GTPase that catalyzes slow GTP hydrolysis, GTPase activity is stimulated by the 30S ribosomal subunit. The sequence is that of Small ribosomal subunit biogenesis GTPase RsgA from Aquifex aeolicus (strain VF5).